Here is a 177-residue protein sequence, read N- to C-terminus: ATP synthase subunit delta (177 aa).

Belongs to the ATPase delta chain family. In terms of assembly, F-type ATPases have 2 components, F(1) - the catalytic core - and F(0) - the membrane proton channel. F(1) has five subunits: alpha(3), beta(3), gamma(1), delta(1), epsilon(1). F(0) has three main subunits: a(1), b(2) and c(10-14). The alpha and beta chains form an alternating ring which encloses part of the gamma chain. F(1) is attached to F(0) by a central stalk formed by the gamma and epsilon chains, while a peripheral stalk is formed by the delta and b chains.

It localises to the cell membrane. Its function is as follows. F(1)F(0) ATP synthase produces ATP from ADP in the presence of a proton or sodium gradient. F-type ATPases consist of two structural domains, F(1) containing the extramembraneous catalytic core and F(0) containing the membrane proton channel, linked together by a central stalk and a peripheral stalk. During catalysis, ATP synthesis in the catalytic domain of F(1) is coupled via a rotary mechanism of the central stalk subunits to proton translocation. This protein is part of the stalk that links CF(0) to CF(1). It either transmits conformational changes from CF(0) to CF(1) or is implicated in proton conduction. This Buchnera aphidicola subsp. Schizaphis graminum (strain Sg) protein is ATP synthase subunit delta.